A 123-amino-acid chain; its full sequence is Fluoride-specific ion channel FluC (123 aa).

A run of 4 helical transmembrane segments spans residues 7–27 (MAIALGGAFGAVARFYISGLL), 39–59 (MVNSIASLILGYLYGLLFWGF), 68–88 (FFGTGFCGALSTFSTFSYETF), and 101–121 (LNILANVIITIALVFAGFMLA). Residues Gly75 and Ser78 each coordinate Na(+).

Belongs to the fluoride channel Fluc/FEX (TC 1.A.43) family.

It localises to the cell membrane. The enzyme catalyses fluoride(in) = fluoride(out). Na(+) is not transported, but it plays an essential structural role and its presence is essential for fluoride channel function. Fluoride-specific ion channel. Important for reducing fluoride concentration in the cell, thus reducing its toxicity. In Thermococcus kodakarensis (strain ATCC BAA-918 / JCM 12380 / KOD1) (Pyrococcus kodakaraensis (strain KOD1)), this protein is Fluoride-specific ion channel FluC.